Reading from the N-terminus, the 1053-residue chain is Mediator of RNA polymerase II transcription subunit 16 (1053 aa).

The disordered stretch occupies residues 139 to 170; that stretch reads KTEGNTEKNKDTKQIGNGSGTNGHGDSPINTP. Residues 142 to 151 show a composition bias toward basic and acidic residues; it reads GNTEKNKDTK.

This sequence belongs to the Mediator complex subunit 16 family. Component of the Mediator complex.

The protein localises to the nucleus. Functionally, component of the Mediator complex, a coactivator involved in the regulated transcription of nearly all RNA polymerase II-dependent genes. Mediator functions as a bridge to convey information from gene-specific regulatory proteins to the basal RNA polymerase II transcription machinery. Mediator is recruited to promoters by direct interactions with regulatory proteins and serves as a scaffold for the assembly of a functional preinitiation complex with RNA polymerase II and the general transcription factors. In Candida albicans (strain SC5314 / ATCC MYA-2876) (Yeast), this protein is Mediator of RNA polymerase II transcription subunit 16 (SIN4).